The chain runs to 456 residues: Adenylosuccinate lyase (456 aa).

Residues 15-16, 90-92, and 122-123 each bind N(6)-(1,2-dicarboxyethyl)-AMP; these read RY, NHD, and TS. Residue His-171 is the Proton donor/acceptor of the active site. Residue Gln-248 participates in N(6)-(1,2-dicarboxyethyl)-AMP binding. The active-site Proton donor/acceptor is Ser-296. N(6)-(1,2-dicarboxyethyl)-AMP is bound by residues Ser-297, 302-304, Asn-310, Arg-336, and 341-345; these read KVN and STVLR.

This sequence belongs to the lyase 1 family. Adenylosuccinate lyase subfamily. As to quaternary structure, homotetramer. Residues from neighboring subunits contribute catalytic and substrate-binding residues to each active site.

The catalysed reaction is N(6)-(1,2-dicarboxyethyl)-AMP = fumarate + AMP. The enzyme catalyses (2S)-2-[5-amino-1-(5-phospho-beta-D-ribosyl)imidazole-4-carboxamido]succinate = 5-amino-1-(5-phospho-beta-D-ribosyl)imidazole-4-carboxamide + fumarate. Its pathway is purine metabolism; AMP biosynthesis via de novo pathway; AMP from IMP: step 2/2. The protein operates within purine metabolism; IMP biosynthesis via de novo pathway; 5-amino-1-(5-phospho-D-ribosyl)imidazole-4-carboxamide from 5-amino-1-(5-phospho-D-ribosyl)imidazole-4-carboxylate: step 2/2. Its function is as follows. Catalyzes two reactions in de novo purine nucleotide biosynthesis. Catalyzes the breakdown of 5-aminoimidazole- (N-succinylocarboxamide) ribotide (SAICAR or 2-[5-amino-1-(5-phospho-beta-D-ribosyl)imidazole-4-carboxamido]succinate) to 5-aminoimidazole-4-carboxamide ribotide (AICAR or 5-amino-1-(5-phospho-beta-D-ribosyl)imidazole-4-carboxamide) and fumarate, and of adenylosuccinate (ADS or N(6)-(1,2-dicarboxyethyl)-AMP) to adenosine monophosphate (AMP) and fumarate. In Pseudomonas aeruginosa (strain ATCC 15692 / DSM 22644 / CIP 104116 / JCM 14847 / LMG 12228 / 1C / PRS 101 / PAO1), this protein is Adenylosuccinate lyase (purB).